The chain runs to 323 residues: GDP-mannose 4,6-dehydratase (323 aa).

NADP(+) is bound by residues 11-14, Arg-36, 59-60, and 81-85; these read TGQD, DM, and LAAQS. The active site involves Thr-126. Catalysis depends on nucleophile residues Glu-128 and Tyr-150. Residues Lys-154, His-180, and Arg-185 each coordinate NADP(+).

The protein belongs to the NAD(P)-dependent epimerase/dehydratase family. GDP-mannose 4,6-dehydratase subfamily. In terms of assembly, homotetramer. It depends on NADP(+) as a cofactor.

It carries out the reaction GDP-alpha-D-mannose = GDP-4-dehydro-alpha-D-rhamnose + H2O. It participates in bacterial outer membrane biogenesis; lipopolysaccharide biosynthesis. In terms of biological role, catalyzes the conversion of GDP-D-mannose to GDP-4-dehydro-6-deoxy-D-mannose. In Pseudomonas aeruginosa (strain ATCC 15692 / DSM 22644 / CIP 104116 / JCM 14847 / LMG 12228 / 1C / PRS 101 / PAO1), this protein is GDP-mannose 4,6-dehydratase.